The following is a 185-amino-acid chain: Chromobox protein homolog 1 (185 aa).

Residues Lys-9 and Lys-33 each participate in a glycyl lysine isopeptide (Lys-Gly) (interchain with G-Cter in SUMO2) cross-link. In terms of domain architecture, Chromo 1 spans 21–79 (YVVEKVLDRRVVKGKVEYLLKWKGFSDEDNTWEPEENLDCPDLIAEFLQSQKTAHETDK). The disordered stretch occupies residues 63 to 124 (LIAEFLQSQK…RGLEPERIIG (62 aa)). Over residues 73–89 (TAHETDKSEGGKRKADS) the composition is skewed to basic and acidic residues. Phosphoserine is present on residues Ser-89 and Ser-91. Residues 96-121 (EESKPKKKKEESEKPRGFARGLEPER) are compositionally biased toward basic and acidic residues. Residues Lys-99 and Lys-150 each participate in a glycyl lysine isopeptide (Lys-Gly) (interchain with G-Cter in SUMO2) cross-link. One can recognise a Chromo 2; shadow subtype domain in the interval 117–175 (LEPERIIGATDSSGELMFLMKWKNSDEADLVPAKEANVKCPQVVISFYEERLTWHSYPS). Phosphoserine is present on Ser-175.

In terms of assembly, homodimer. Interacts directly with CHAF1A, EMSY, LBR, TIF1/TIF1A and TRIM28/TIF1B PXVXL motif via the chromoshadow domain. Interacts directly with histone H3 methylated at 'Lys-9' via the chromo domain. Interacts with SUV39H1 and SETDB1, KMT5B and KMT5C. Interacts with PRDM6. Interacts with POGZ. Interacts with CHAMP1. Interacts with INCENP. Interacts with SGO1; the CBX1 homodimer binds to one molecule of SGO1. Interacts with LRIF1 (via PxVxL motif). Interacts with HDGFL2. Interacts with CHD3. Interacts with CHD4. Post-translationally, not phosphorylated. Ubiquitinated. Expressed in all adult and embryonic tissues.

It localises to the nucleus. Its function is as follows. Component of heterochromatin. Recognizes and binds histone H3 tails methylated at 'Lys-9', leading to epigenetic repression. Interaction with lamin B receptor (LBR) can contribute to the association of the heterochromatin with the inner nuclear membrane. This is Chromobox protein homolog 1 (CBX1) from Homo sapiens (Human).